Reading from the N-terminus, the 244-residue chain is Flavin-dependent thymidylate synthase (244 aa).

Positions 2–207 (VRVTLVNYTR…ELRPIIKWAK (206 aa)) constitute a ThyX domain. Residues serine 56, 80–82 (RHR), and glutamine 88 contribute to the FAD site. DUMP is bound by residues 77 to 80 (QLVR), 88 to 92 (QQSQR), and arginine 146. Positions 80–90 (RHRIASYTQQS) match the ThyX motif motif. Residues 162–164 (NLR) and histidine 168 contribute to the FAD site. A dUMP-binding site is contributed by arginine 173. The active-site Involved in ionization of N3 of dUMP, leading to its activation is the arginine 173.

It belongs to the thymidylate synthase ThyX family. In terms of assembly, homotetramer. It depends on FAD as a cofactor.

It catalyses the reaction dUMP + (6R)-5,10-methylene-5,6,7,8-tetrahydrofolate + NADPH + H(+) = dTMP + (6S)-5,6,7,8-tetrahydrofolate + NADP(+). It participates in pyrimidine metabolism; dTTP biosynthesis. Catalyzes the reductive methylation of 2'-deoxyuridine-5'-monophosphate (dUMP) to 2'-deoxythymidine-5'-monophosphate (dTMP) while utilizing 5,10-methylenetetrahydrofolate (mTHF) as the methyl donor, and NADPH and FADH(2) as the reductant. The sequence is that of Flavin-dependent thymidylate synthase from Pyrococcus abyssi (strain GE5 / Orsay).